Reading from the N-terminus, the 213-residue chain is ATP synthase peripheral stalk subunit OSCP, mitochondrial (213 aa).

Residues 1-23 (MAAPAVSGLSRQVRYFSTSVVRP) constitute a mitochondrion transit peptide. The SIFI-degron signature appears at 5-23 (AVSGLSRQVRYFSTSVVRP). Lys-54, Lys-60, Lys-70, and Lys-73 each carry N6-acetyllysine. Position 90 is an N6-succinyllysine (Lys-90). Residues Lys-158 and Lys-162 each carry the N6-acetyllysine; alternate modification. Lys-158 and Lys-162 each carry N6-succinyllysine; alternate. Residues Lys-172, Lys-176, and Lys-192 each carry the N6-acetyllysine modification. Lys-199 carries the post-translational modification N6-succinyllysine.

This sequence belongs to the ATPase delta chain family. Component of the ATP synthase complex composed at least of ATP5F1A/subunit alpha, ATP5F1B/subunit beta, ATP5MC1/subunit c (homooctomer), MT-ATP6/subunit a, MT-ATP8/subunit 8, ATP5ME/subunit e, ATP5MF/subunit f, ATP5MG/subunit g, ATP5MK/subunit k, ATP5MJ/subunit j, ATP5F1C/subunit gamma, ATP5F1D/subunit delta, ATP5F1E/subunit epsilon, ATP5PF/subunit F6, ATP5PB/subunit b, ATP5PD/subunit d, ATP5PO/subunit OSCP. ATP synthase complex consists of a soluble F(1) head domain (subunits alpha(3) and beta(3)) - the catalytic core - and a membrane F(0) domain - the membrane proton channel (subunits c, a, 8, e, f, g, k and j). These two domains are linked by a central stalk (subunits gamma, delta, and epsilon) rotating inside the F1 region and a stationary peripheral stalk (subunits F6, b, d, and OSCP). In terms of processing, acetylation at Lys-162 decreases ATP production. Deacetylated by SIRT3. In response to mitochondrial stress, the precursor protein is ubiquitinated by the SIFI complex in the cytoplasm before mitochondrial import, leading to its degradation. Within the SIFI complex, UBR4 initiates ubiquitin chain that are further elongated or branched by KCMF1.

It localises to the mitochondrion. The protein resides in the mitochondrion inner membrane. Functionally, subunit OSCP, of the mitochondrial membrane ATP synthase complex (F(1)F(0) ATP synthase or Complex V) that produces ATP from ADP in the presence of a proton gradient across the membrane which is generated by electron transport complexes of the respiratory chain. ATP synthase complex consist of a soluble F(1) head domain - the catalytic core - and a membrane F(1) domain - the membrane proton channel. These two domains are linked by a central stalk rotating inside the F(1) region and a stationary peripheral stalk. During catalysis, ATP synthesis in the catalytic domain of F(1) is coupled via a rotary mechanism of the central stalk subunits to proton translocation. In vivo, can only synthesize ATP although its ATP hydrolase activity can be activated artificially in vitro. Part of the complex F(0) domain. Part of the complex F(0) domain and the peripheric stalk, which acts as a stator to hold the catalytic alpha(3)beta(3) subcomplex and subunit a/ATP6 static relative to the rotary elements. This chain is ATP synthase peripheral stalk subunit OSCP, mitochondrial, found in Plecturocebus moloch (Dusky titi monkey).